Consider the following 323-residue polypeptide: tRNA dimethylallyltransferase (323 aa).

32 to 39 (GPTASGKS) lines the ATP pocket. Substrate is bound at residue 34–39 (TASGKS). The tract at residues 57–60 (DSMQ) is interaction with substrate tRNA.

Belongs to the IPP transferase family. Monomer. The cofactor is Mg(2+).

The enzyme catalyses adenosine(37) in tRNA + dimethylallyl diphosphate = N(6)-dimethylallyladenosine(37) in tRNA + diphosphate. Its function is as follows. Catalyzes the transfer of a dimethylallyl group onto the adenine at position 37 in tRNAs that read codons beginning with uridine, leading to the formation of N6-(dimethylallyl)adenosine (i(6)A). This is tRNA dimethylallyltransferase from Rhodopseudomonas palustris (strain BisB5).